Here is a 435-residue protein sequence, read N- to C-terminus: tRNA modification GTPase MnmE (435 aa).

(6S)-5-formyl-5,6,7,8-tetrahydrofolate contacts are provided by arginine 20, glutamate 77, and lysine 117. Residues 214-359 (GLKIVIAGAP…FIKKLESFCH (146 aa)) form the TrmE-type G domain. Residues 224–229 (NSGKSS), 243–249 (TEEAGTT), and 268–271 (DTAG) each bind GTP. Mg(2+)-binding residues include serine 228 and threonine 249. A (6S)-5-formyl-5,6,7,8-tetrahydrofolate-binding site is contributed by lysine 435.

It belongs to the TRAFAC class TrmE-Era-EngA-EngB-Septin-like GTPase superfamily. TrmE GTPase family. Homodimer. Heterotetramer of two MnmE and two MnmG subunits. K(+) serves as cofactor.

The protein resides in the cytoplasm. Its function is as follows. Exhibits a very high intrinsic GTPase hydrolysis rate. Involved in the addition of a carboxymethylaminomethyl (cmnm) group at the wobble position (U34) of certain tRNAs, forming tRNA-cmnm(5)s(2)U34. The protein is tRNA modification GTPase MnmE of Bartonella tribocorum (strain CIP 105476 / IBS 506).